The primary structure comprises 435 residues: Endoglucanase EG-1 (435 aa).

The N-terminal stretch at 1–20 is a signal peptide; sequence MARGTALLGLTSLLLGLVNG. Glutamine 21 carries the post-translational modification Pyrrolidone carboxylic acid. 3 cysteine pairs are disulfide-bonded: cysteine 38/cysteine 44, cysteine 71/cysteine 93, and cysteine 83/cysteine 89. Asparagine 109 carries N-linked (GlcNAc...) asparagine glycosylation. 6 disulfide bridges follow: cysteine 160–cysteine 385, cysteine 192–cysteine 215, cysteine 196–cysteine 214, cysteine 235–cysteine 254, cysteine 243–cysteine 248, and cysteine 259–cysteine 335. Glutamate 217 functions as the Nucleophile in the catalytic mechanism. Glutamate 222 functions as the Proton donor in the catalytic mechanism. N-linked (GlcNAc...) asparagine glycosylation occurs at asparagine 267.

It belongs to the glycosyl hydrolase 7 (cellulase C) family.

The protein localises to the secreted. The enzyme catalyses Endohydrolysis of (1-&gt;4)-beta-D-glucosidic linkages in cellulose, lichenin and cereal beta-D-glucans.. Functionally, the biological conversion of cellulose to glucose generally requires three types of hydrolytic enzymes: (1) Endoglucanases which cut internal beta-1,4-glucosidic bonds; (2) Exocellobiohydrolases that cut the disaccharide cellobiose from the non-reducing end of the cellulose polymer chain; (3) Beta-1,4-glucosidases which hydrolyze the cellobiose and other short cello-oligosaccharides to glucose. This Humicola insolens (Soft-rot fungus) protein is Endoglucanase EG-1 (EG-1).